Here is a 179-residue protein sequence, read N- to C-terminus: DNA utilization protein HofN (179 aa).

The helical transmembrane segment at 19 to 39 (LRFWLLMFVAPLLLAVGITLI) threads the bilayer.

Its subcellular location is the cell inner membrane. Required for the use of extracellular DNA as a nutrient. The chain is DNA utilization protein HofN (hofN) from Escherichia coli (strain K12).